We begin with the raw amino-acid sequence, 418 residues long: Glutamyl-tRNA(Gln) amidotransferase subunit D (418 aa).

The 332-residue stretch at 74 to 405 (KNISILSTGG…EDAKELMSKD (332 aa)) folds into the Asparaginase/glutaminase domain. Residues Thr-84, Thr-160, Asp-161, and Lys-237 contribute to the active site.

It belongs to the asparaginase 1 family. GatD subfamily. In terms of assembly, heterodimer of GatD and GatE.

The catalysed reaction is L-glutamyl-tRNA(Gln) + L-glutamine + ATP + H2O = L-glutaminyl-tRNA(Gln) + L-glutamate + ADP + phosphate + H(+). Functionally, allows the formation of correctly charged Gln-tRNA(Gln) through the transamidation of misacylated Glu-tRNA(Gln) in organisms which lack glutaminyl-tRNA synthetase. The reaction takes place in the presence of glutamine and ATP through an activated gamma-phospho-Glu-tRNA(Gln). The GatDE system is specific for glutamate and does not act on aspartate. This chain is Glutamyl-tRNA(Gln) amidotransferase subunit D, found in Methanococcus maripaludis (strain C7 / ATCC BAA-1331).